Here is a 368-residue protein sequence, read N- to C-terminus: MRTLHVDLGERSYPIYIGENLLGDARWFAPHIVGRRVAVISNETVAPLYLETLLKALQGHEVTPVVLPDGEAYKQWETLQLIFDALLKERHDRKTTLIALGGGVIGDMAGFAAACYQRGVNFIQVPTTLLSQVDSSVGGKTGINHPLGKNMIGAFYQPQAVVIDTASLKTLPSRELSAGLAEVIKYGFICDEPFITWLEEHMDALLALEPTVVTEAIERSCAAKARVVGADERELGVRATLNLGHTFGHAIETQQGYGVWLHGEAVGAGTVMALEMSHRLGWLSAAERDRGTRLLRRAGLPVVPPAEMTAEDFMEHMAVDKKVLDGRLRLVLLQGLGNAVVTGDFPREILDATLRTDYRALADQLGDE.

NAD(+) is bound by residues 69-74, 103-107, 127-128, Lys-140, and Lys-149; these read DGEAYK, GVIGD, and TT. Glu-182, His-245, and His-262 together coordinate Zn(2+).

It belongs to the sugar phosphate cyclases superfamily. Dehydroquinate synthase family. Requires Co(2+) as cofactor. Zn(2+) serves as cofactor. The cofactor is NAD(+).

Its subcellular location is the cytoplasm. It catalyses the reaction 7-phospho-2-dehydro-3-deoxy-D-arabino-heptonate = 3-dehydroquinate + phosphate. It participates in metabolic intermediate biosynthesis; chorismate biosynthesis; chorismate from D-erythrose 4-phosphate and phosphoenolpyruvate: step 2/7. In terms of biological role, catalyzes the conversion of 3-deoxy-D-arabino-heptulosonate 7-phosphate (DAHP) to dehydroquinate (DHQ). The chain is 3-dehydroquinate synthase from Pseudomonas aeruginosa (strain LESB58).